The chain runs to 102 residues: NADH-quinone oxidoreductase subunit K (102 aa).

A run of 3 helical transmembrane segments spans residues 5–25, 31–51, and 66–86; these read ITHY…GIFL, IIIL…FVAF, and FVLT…VVFF.

Belongs to the complex I subunit 4L family. In terms of assembly, NDH-1 is composed of 14 different subunits. Subunits NuoA, H, J, K, L, M, N constitute the membrane sector of the complex.

The protein localises to the cell inner membrane. The enzyme catalyses a quinone + NADH + 5 H(+)(in) = a quinol + NAD(+) + 4 H(+)(out). NDH-1 shuttles electrons from NADH, via FMN and iron-sulfur (Fe-S) centers, to quinones in the respiratory chain. The immediate electron acceptor for the enzyme in this species is believed to be ubiquinone. Couples the redox reaction to proton translocation (for every two electrons transferred, four hydrogen ions are translocated across the cytoplasmic membrane), and thus conserves the redox energy in a proton gradient. In Bartonella grahamii (strain as4aup), this protein is NADH-quinone oxidoreductase subunit K.